The chain runs to 142 residues: Large ribosomal subunit protein uL11 (142 aa).

It belongs to the universal ribosomal protein uL11 family. Part of the ribosomal stalk of the 50S ribosomal subunit. Interacts with L10 and the large rRNA to form the base of the stalk. L10 forms an elongated spine to which L12 dimers bind in a sequential fashion forming a multimeric L10(L12)X complex. Post-translationally, one or more lysine residues are methylated.

Forms part of the ribosomal stalk which helps the ribosome interact with GTP-bound translation factors. This chain is Large ribosomal subunit protein uL11, found in Serratia proteamaculans (strain 568).